A 183-amino-acid chain; its full sequence is Inosine triphosphate pyrophosphatase (183 aa).

8–13 (TGNKNK) is an ITP binding site. Mg(2+) is bound at residue Glu-36. Residues Lys-48, 64-65 (DT), Lys-81, 140-143 (FGWD), Lys-161, and 166-167 (HR) contribute to the ITP site.

The protein belongs to the HAM1 NTPase family. Homodimer. The cofactor is Mg(2+). Mn(2+) is required as a cofactor.

Its subcellular location is the cytoplasm. The protein localises to the nucleus. It catalyses the reaction ITP + H2O = IMP + diphosphate + H(+). It carries out the reaction dITP + H2O = dIMP + diphosphate + H(+). The catalysed reaction is XTP + H2O = XMP + diphosphate + H(+). Pyrophosphatase that hydrolyzes non-canonical purine nucleotides such as inosine triphosphate (ITP), deoxyinosine triphosphate (dITP) or xanthosine 5'-triphosphate (XTP) to their respective monophosphate derivatives. The enzyme does not distinguish between the deoxy- and ribose forms. Probably excludes non-canonical purines from RNA and DNA precursor pools, thus preventing their incorporation into RNA and DNA and avoiding chromosomal lesions. The sequence is that of Inosine triphosphate pyrophosphatase from Ajellomyces capsulatus (strain G186AR / H82 / ATCC MYA-2454 / RMSCC 2432) (Darling's disease fungus).